Consider the following 316-residue polypeptide: ATP synthase gamma chain (316 aa).

Belongs to the ATPase gamma chain family. In terms of assembly, F-type ATPases have 2 components, CF(1) - the catalytic core - and CF(0) - the membrane proton channel. CF(1) has five subunits: alpha(3), beta(3), gamma(1), delta(1), epsilon(1). CF(0) has three main subunits: a, b and c.

It localises to the cellular thylakoid membrane. In terms of biological role, produces ATP from ADP in the presence of a proton gradient across the membrane. The gamma chain is believed to be important in regulating ATPase activity and the flow of protons through the CF(0) complex. This Prochlorococcus marinus (strain MIT 9303) protein is ATP synthase gamma chain.